We begin with the raw amino-acid sequence, 440 residues long: Actin-like protein 7A (440 aa).

Residues 1-29 are disordered; the sequence is MSLDGVWAPQTANIGDGPAKKASDQASMQ. Residues 36–56 form a required for interaction with TES region; sequence ASLKDGPAKRAVWVRRDNAET.

Belongs to the actin family. Interacts (via N-terminus) with TES (via LIM domain 2). Heterodimer with TES; the heterodimer interacts with ENAH to form a heterotrimer. Interacts with ACTL9. Interacts with CYLC1; the interaction may be relevant for proper acrosome attachment to the nuclear envelope. In terms of tissue distribution, detected in testis. Detected at the acrosome of round spermatids (at protein level). Detected in adult and embryonic testis. Detected in developing male germ cells.

The protein resides in the cytoplasm. It is found in the cytoskeleton. Its subcellular location is the golgi apparatus. The protein localises to the nucleus. It localises to the cytoplasmic vesicle. The protein resides in the secretory vesicle. It is found in the acrosome. Essential for normal spermatogenesis and male fertility. Required for normal sperm head morphology, acroplaxome formation, acrosome attachment, and acrosome granule stability. May anchor and stabilize acrosomal adherence to the acroplaxome at least in part by facilitating the presence of F-actin in the subacrosomal space. May play an important role in formation and fusion of Golgi-derived vesicles during acrosome biogenesis. This chain is Actin-like protein 7A (Actl7a), found in Mus musculus (Mouse).